The chain runs to 490 residues: Betaine aldehyde dehydrogenase (490 aa).

D93 serves as a coordination point for K(+). NAD(+) is bound at residue 150–152; the sequence is GAW. The active-site Charge relay system is the K162. NAD(+) is bound at residue 176–179; the sequence is KPSE. A K(+)-binding site is contributed by V180. Position 230-233 (230-233) interacts with NAD(+); sequence GIAS. A K(+)-binding site is contributed by L246. Residue E252 is the Proton acceptor of the active site. 3 residues coordinate NAD(+): G254, C286, and E387. C286 serves as the catalytic Nucleophile. C286 carries the cysteine sulfenic acid (-SOH) modification. K(+) is bound by residues K457 and G460. The active-site Charge relay system is the E464.

Belongs to the aldehyde dehydrogenase family. Dimer of dimers. It depends on K(+) as a cofactor.

It carries out the reaction betaine aldehyde + NAD(+) + H2O = glycine betaine + NADH + 2 H(+). It functions in the pathway amine and polyamine biosynthesis; betaine biosynthesis via choline pathway; betaine from betaine aldehyde: step 1/1. Functionally, involved in the biosynthesis of the osmoprotectant glycine betaine. Catalyzes the irreversible oxidation of betaine aldehyde to the corresponding acid. The protein is Betaine aldehyde dehydrogenase of Yersinia pseudotuberculosis serotype O:3 (strain YPIII).